Reading from the N-terminus, the 429-residue chain is SET domain-containing protein 8 (429 aa).

The SET domain maps to 17–232 (KQITIKKIRK…ENEEVTINYG (216 aa)).

This sequence belongs to the class V-like SAM-binding methyltransferase superfamily.

It is found in the cytoplasm. Its subcellular location is the nucleus. The chain is SET domain-containing protein 8 (set8) from Schizosaccharomyces pombe (strain 972 / ATCC 24843) (Fission yeast).